Reading from the N-terminus, the 369-residue chain is Anhydro-N-acetylmuramic acid kinase (369 aa).

12–19 (GTSLDGVD) serves as a coordination point for ATP.

This sequence belongs to the anhydro-N-acetylmuramic acid kinase family.

It carries out the reaction 1,6-anhydro-N-acetyl-beta-muramate + ATP + H2O = N-acetyl-D-muramate 6-phosphate + ADP + H(+). The protein operates within amino-sugar metabolism; 1,6-anhydro-N-acetylmuramate degradation. It participates in cell wall biogenesis; peptidoglycan recycling. Catalyzes the specific phosphorylation of 1,6-anhydro-N-acetylmuramic acid (anhMurNAc) with the simultaneous cleavage of the 1,6-anhydro ring, generating MurNAc-6-P. Is required for the utilization of anhMurNAc either imported from the medium or derived from its own cell wall murein, and thus plays a role in cell wall recycling. This Escherichia coli (strain SMS-3-5 / SECEC) protein is Anhydro-N-acetylmuramic acid kinase.